The chain runs to 61 residues: UPF0181 protein Ent638_2380 (61 aa).

The protein belongs to the UPF0181 family.

The sequence is that of UPF0181 protein Ent638_2380 from Enterobacter sp. (strain 638).